The sequence spans 468 residues: UDP-N-acetylmuramate--L-alanine ligase (468 aa).

Residue 112–118 (GTHGKTT) participates in ATP binding.

Belongs to the MurCDEF family.

The protein localises to the cytoplasm. The enzyme catalyses UDP-N-acetyl-alpha-D-muramate + L-alanine + ATP = UDP-N-acetyl-alpha-D-muramoyl-L-alanine + ADP + phosphate + H(+). The protein operates within cell wall biogenesis; peptidoglycan biosynthesis. Its function is as follows. Cell wall formation. This is UDP-N-acetylmuramate--L-alanine ligase from Bordetella pertussis (strain Tohama I / ATCC BAA-589 / NCTC 13251).